The primary structure comprises 266 residues: Tryptophan synthase alpha chain (266 aa).

Active-site proton acceptor residues include Glu49 and Asp60.

The protein belongs to the TrpA family. As to quaternary structure, tetramer of two alpha and two beta chains.

The catalysed reaction is (1S,2R)-1-C-(indol-3-yl)glycerol 3-phosphate + L-serine = D-glyceraldehyde 3-phosphate + L-tryptophan + H2O. The protein operates within amino-acid biosynthesis; L-tryptophan biosynthesis; L-tryptophan from chorismate: step 5/5. Functionally, the alpha subunit is responsible for the aldol cleavage of indoleglycerol phosphate to indole and glyceraldehyde 3-phosphate. In Synechococcus elongatus (strain ATCC 33912 / PCC 7942 / FACHB-805) (Anacystis nidulans R2), this protein is Tryptophan synthase alpha chain.